Reading from the N-terminus, the 763-residue chain is Eukaryotic translation initiation factor 3 subunit B (763 aa).

The sufficient for interaction with HCR1 and TIF32 stretch occupies residues 1-136; that stretch reads MKNFLPRTLK…LFVECGSMND (136 aa). A sufficient for interaction with PIC8 region spans residues 28–261; the sequence is RNTQLKRSKI…GVTAWGGPNF (234 aa). Ser-61 is subject to Phosphoserine. Tyr-67 carries the post-translational modification Phosphotyrosine. The RRM domain maps to 77-162; sequence QYIVVNGAPV…HRLFLYTMKD (86 aa). 6 WD repeats span residues 228 to 266, 277 to 325, 373 to 416, 484 to 524, 544 to 589, and 605 to 650; these read RENWSTNYVRFSPKGTYLFSYHQQGVTAWGGPNFDRLRR, VSPN…LMAT, LKPS…SACT, ELKD…IRFY, IPKT…EKNI, and PTYS…VKED. Phosphoserine is present on Ser-669.

Belongs to the eIF-3 subunit B family. As to quaternary structure, the eukaryotic translation initiation factor 3 (eIF-3) core complex is composed of TIF32, PRT1, NIP1, TIF34 and TIF35. A subcomplex of TIF32, NIP1 and PRT1 mediates the interaction with eIF-1, TIF5/eIF-5 and HCR1. The factors eIF-1, eIF-2, eIF-3, TIF5/eIF-5 and methionyl-tRNAi form a multifactor complex (MFC) that may bind to the 40S ribosome.

Its subcellular location is the cytoplasm. Functionally, RNA-binding component of the eukaryotic translation initiation factor 3 (eIF-3) complex, which is involved in protein synthesis of a specialized repertoire of mRNAs and, together with other initiation factors, stimulates binding of mRNA and methionyl-tRNAi to the 40S ribosome. The eIF-3 complex specifically targets and initiates translation of a subset of mRNAs involved in cell proliferation. The protein is Eukaryotic translation initiation factor 3 subunit B of Saccharomyces cerevisiae (strain ATCC 204508 / S288c) (Baker's yeast).